We begin with the raw amino-acid sequence, 107 residues long: Small ribosomal subunit protein uS15 (107 aa).

Lys27 is modified (N6-acetyllysine; alternate). The residue at position 27 (Lys27) is an N6-succinyllysine; alternate. Lys27 participates in a covalent cross-link: Glycyl lysine isopeptide (Lys-Gly) (interchain with G-Cter in ubiquitin). Ser30 carries the phosphoserine modification. Lys34 is modified (N6-succinyllysine). Tyr38 is modified (phosphotyrosine). Residue Lys43 forms a Glycyl lysine isopeptide (Lys-Gly) (interchain with G-Cter in SUMO2) linkage.

The protein belongs to the universal ribosomal protein uS15 family. As to quaternary structure, component of the small ribosomal subunit. Part of the small subunit (SSU) processome, composed of more than 70 proteins and the RNA chaperone small nucleolar RNA (snoRNA) U3. Ubiquitinated at Lys-27 by RNF14 and RNF25 in response to ribosome collisions (ribosome stalling).

It is found in the cytoplasm. The protein localises to the nucleus. Its subcellular location is the nucleolus. Its function is as follows. Component of the small ribosomal subunit. The ribosome is a large ribonucleoprotein complex responsible for the synthesis of proteins in the cell. Part of the small subunit (SSU) processome, first precursor of the small eukaryotic ribosomal subunit. During the assembly of the SSU processome in the nucleolus, many ribosome biogenesis factors, an RNA chaperone and ribosomal proteins associate with the nascent pre-rRNA and work in concert to generate RNA folding, modifications, rearrangements and cleavage as well as targeted degradation of pre-ribosomal RNA by the RNA exosome. The polypeptide is Small ribosomal subunit protein uS15 (RPS13) (Sus scrofa (Pig)).